The primary structure comprises 338 residues: Lipoate-protein ligase A (338 aa).

Residues 29–216 (SPDQRVLFLW…AFFAYYDEQV (188 aa)) enclose the BPL/LPL catalytic domain. ATP-binding positions include Arg-71, 76–79 (GAVF), and Lys-134. (R)-lipoate is bound at residue Lys-134.

This sequence belongs to the LplA family. In terms of assembly, monomer.

It is found in the cytoplasm. It catalyses the reaction L-lysyl-[lipoyl-carrier protein] + (R)-lipoate + ATP = N(6)-[(R)-lipoyl]-L-lysyl-[lipoyl-carrier protein] + AMP + diphosphate + H(+). Its pathway is protein modification; protein lipoylation via exogenous pathway; protein N(6)-(lipoyl)lysine from lipoate: step 1/2. It functions in the pathway protein modification; protein lipoylation via exogenous pathway; protein N(6)-(lipoyl)lysine from lipoate: step 2/2. Catalyzes both the ATP-dependent activation of exogenously supplied lipoate to lipoyl-AMP and the transfer of the activated lipoyl onto the lipoyl domains of lipoate-dependent enzymes. The chain is Lipoate-protein ligase A from Yersinia pseudotuberculosis serotype IB (strain PB1/+).